A 1353-amino-acid chain; its full sequence is Protein prickle (1353 aa).

3 disordered regions span residues 130–206, 266–292, and 500–540; these read VDDG…TKRN, QEEE…PPLP, and AKYS…SAHA. Residues 147 to 165 show a composition bias toward low complexity; sequence TPTATATAGRPLFPLSSSP. Residues 166–178 show a composition bias toward basic residues; sequence RRSKKLLRSLRAH. Positions 179 to 189 are enriched in basic and acidic residues; that stretch reads VKGESRPEKPA. The span at 514 to 532 shows a compositional bias: low complexity; it reads LSPALSTPSPPSLLHHPAA. Positions 548-656 constitute a PET domain; it reads MDMQRQSHSD…NVRQLMSARP (109 aa). LIM zinc-binding domains follow at residues 655–719, 720–780, and 781–843; these read RPCD…ETLK, PRCS…MFAE, and YCDY…GEPP. Disordered regions lie at residues 840–892, 933–962, and 1062–1303; these read GEPP…HQAS, HCRS…NMSP, and ADIM…SSSS. Residues 861 to 892 show a composition bias toward low complexity; that stretch reads TQRVRPQTRITSSHASSSPPMSPQQQQQHQAS. 2 stretches are compositionally biased toward polar residues: residues 952–962 and 1111–1120; these read RASSTSHNMSP and SLNTPLSAHS. Residues 1130–1142 are compositionally biased toward low complexity; that stretch reads SILSGASSSSPMS. Over residues 1177-1205 the composition is skewed to basic and acidic residues; it reads GDKDRDRDRERDRDRDRDKGGDKDRESGR. Composition is skewed to basic residues over residues 1207-1220 and 1228-1240; these read GPGH…RRKS and NHHR…RSHS. The segment covering 1269 to 1284 has biased composition (basic and acidic residues); that stretch reads ETAHKSPRQQRERERE.

It belongs to the prickle / espinas / testin family. As to quaternary structure, interacts with dsh; PET and LIM domains interact with dsh DEP domain, in wing cells. Interacts with Vang in photoreceptor cells.

The protein localises to the cell membrane. In terms of biological role, acts in a planar cell polarity (PCP) complex; polarization along the apical/basal axis of epithelial cells. PCP signaling in the wing disk requires the receptor fz and the cytoplasmic proteins dsh and pk. These act in a feedback loop leading to activation of the jnk cascade and subsequent polarized arrangement of hairs and bristles. Dgo and pk compete with one another for dsh binding, thereby modulating fz dsh activity and ensuring tight control over fz PCP signaling. Vang, stan and pk function together to regulate the establishment of tissue polarity in the adult eye. The chain is Protein prickle from Drosophila pseudoobscura pseudoobscura (Fruit fly).